The primary structure comprises 122 residues: MVLELSKLNVADNSGAKEVGVIRVLGGSRKKTANIGDVIICSVKKAIPTGIVKEGQVVKAVIVRSVYGIHRENGQHIRFDDNAVVIIKDDKTPRGTRVFGPVARELRDKGYLKIVSLAPEVL.

It belongs to the universal ribosomal protein uL14 family. Part of the 50S ribosomal subunit. Forms a cluster with proteins L3 and L19. In the 70S ribosome, L14 and L19 interact and together make contacts with the 16S rRNA in bridges B5 and B8.

Functionally, binds to 23S rRNA. Forms part of two intersubunit bridges in the 70S ribosome. The protein is Large ribosomal subunit protein uL14 of Mycoplasmopsis agalactiae (strain NCTC 10123 / CIP 59.7 / PG2) (Mycoplasma agalactiae).